The chain runs to 195 residues: Pyridoxal 5'-phosphate synthase subunit PdxT (195 aa).

Glycine 53–serine 55 contributes to the L-glutamine binding site. Cysteine 82 serves as the catalytic Nucleophile. L-glutamine contacts are provided by residues arginine 108 and isoleucine 134–arginine 135. Residues histidine 173 and glutamate 175 each act as charge relay system in the active site.

Belongs to the glutaminase PdxT/SNO family. In terms of assembly, in the presence of PdxS, forms a dodecamer of heterodimers. Only shows activity in the heterodimer.

The enzyme catalyses aldehydo-D-ribose 5-phosphate + D-glyceraldehyde 3-phosphate + L-glutamine = pyridoxal 5'-phosphate + L-glutamate + phosphate + 3 H2O + H(+). It catalyses the reaction L-glutamine + H2O = L-glutamate + NH4(+). The protein operates within cofactor biosynthesis; pyridoxal 5'-phosphate biosynthesis. Its function is as follows. Catalyzes the hydrolysis of glutamine to glutamate and ammonia as part of the biosynthesis of pyridoxal 5'-phosphate. The resulting ammonia molecule is channeled to the active site of PdxS. This chain is Pyridoxal 5'-phosphate synthase subunit PdxT, found in Methanobrevibacter smithii (strain ATCC 35061 / DSM 861 / OCM 144 / PS).